The chain runs to 648 residues: Threonine--tRNA ligase (648 aa).

Residues 1–61 (MIDIILPDGS…INTATVKAIT (61 aa)) enclose the TGS domain. The interval 243–549 (DHRKLGRELE…LIEHYSGRLP (307 aa)) is catalytic. The Zn(2+) site is built by Cys-349, His-400, and His-526.

This sequence belongs to the class-II aminoacyl-tRNA synthetase family. As to quaternary structure, homodimer. The cofactor is Zn(2+).

The protein localises to the cytoplasm. It catalyses the reaction tRNA(Thr) + L-threonine + ATP = L-threonyl-tRNA(Thr) + AMP + diphosphate + H(+). In terms of biological role, catalyzes the attachment of threonine to tRNA(Thr) in a two-step reaction: L-threonine is first activated by ATP to form Thr-AMP and then transferred to the acceptor end of tRNA(Thr). Also edits incorrectly charged L-seryl-tRNA(Thr). The sequence is that of Threonine--tRNA ligase from Orientia tsutsugamushi (strain Boryong) (Rickettsia tsutsugamushi).